A 162-amino-acid chain; its full sequence is NADH-quinone oxidoreductase subunit I (162 aa).

4Fe-4S ferredoxin-type domains lie at 54–83 (RRYE…IESE) and 93–122 (TRYD…ETQI). The [4Fe-4S] cluster site is built by Cys63, Cys66, Cys69, Cys73, Cys102, Cys105, Cys108, and Cys112.

This sequence belongs to the complex I 23 kDa subunit family. NDH-1 is composed of 14 different subunits. Subunits NuoA, H, J, K, L, M, N constitute the membrane sector of the complex. Requires [4Fe-4S] cluster as cofactor.

Its subcellular location is the cell inner membrane. The catalysed reaction is a quinone + NADH + 5 H(+)(in) = a quinol + NAD(+) + 4 H(+)(out). NDH-1 shuttles electrons from NADH, via FMN and iron-sulfur (Fe-S) centers, to quinones in the respiratory chain. The immediate electron acceptor for the enzyme in this species is believed to be ubiquinone. Couples the redox reaction to proton translocation (for every two electrons transferred, four hydrogen ions are translocated across the cytoplasmic membrane), and thus conserves the redox energy in a proton gradient. The protein is NADH-quinone oxidoreductase subunit I of Burkholderia ambifaria (strain MC40-6).